A 507-amino-acid chain; its full sequence is tRNA (guanine(10)-N(2))-methyltransferase TRMT11 (507 aa).

Basic and acidic residues predominate over residues 459 to 475; that stretch reads EKTKKKEQKKKSVENHL. The interval 459–507 is disordered; that stretch reads EKTKKKEQKKKSVENHLKSKNNNDVINNNSNDTNSNNNCNNENNIENQK. Over residues 480–507 the composition is skewed to low complexity; it reads NNDVINNNSNDTNSNNNCNNENNIENQK.

Belongs to the class I-like SAM-binding methyltransferase superfamily. TRM11 methyltransferase family. As to quaternary structure, part of the heterodimeric TRMT11-TRM112 methyltransferase complex; this complex forms an active tRNA methyltransferase, where TRMT112 acts as an activator of the catalytic subunit TRMT11.

It is found in the cytoplasm. It carries out the reaction guanosine(10) in tRNA + S-adenosyl-L-methionine = N(2)-methylguanosine(10) in tRNA + S-adenosyl-L-homocysteine + H(+). Its function is as follows. Catalytic subunit of the TRMT11-TRM112 methyltransferase complex, that specifically mediates the S-adenosyl-L-methionine-dependent N(2)-methylation of guanosine nucleotide at position 10 (m2G10) in tRNAs. This is one of the major tRNA (guanine-N(2))-methyltransferases. This Dictyostelium discoideum (Social amoeba) protein is tRNA (guanine(10)-N(2))-methyltransferase TRMT11 (trmt11).